The sequence spans 908 residues: MYNNNNDGGGGGSANGNTMQQRRKTTTRSRSKQQQQQQCTSENVIEKNQTNGAQNERLHFRGSSKDSALSTPLLPRSRSTTSAINSPSPLCCNGGLSILNCCRDVNCHLNAPLRGSVESSRSRRSESRQSSLTATPTTTPKQASPSPTISERSRSCSGSRSRSCSCDGRLVDCHKHSAAAAAASTAAPQFTVNLSIDLFSWTLFLLAFCTRFYKLATPPHIVFDELHYGKYIAHYMRNIFFFDQHPPLGKQLIAGLVSLAGYDGNYTFSRIGAAYAPDVPIFWFRFIPALCGSLLAPAVYRLLLEARLHRWAAALGGLLVVLDNSLLTQSRFVLMESMLLLASTLGIACLLRFQRCRLGSFQWLCNGSAAGVLLACAGAVKYIGFLALALAGYLLCRHLWQLLYDASLTNRQLWMHALSRLLLFVGIPIAVYIGVFYVHFRTLHRAGPHDSIMTSAFQASLEGGLASITSGQPLAVVHGSQITLRHTHGRTCWLHSHAAVYPVRYKDKRGSSHQQQVTCYSFKDVNNWWIVKRPERDDLVVGEQPDVIQHGDVIQLVHGITSRALNSHDVAAPMTPQCQEVSCYIDYEIKMAGELLWRVEILNRNSEGDSWHAIKSEIRLVHESTGAALKFSGRQLPDWGFNQHEVVADRDQVHEDAIWNVEEHRYTKTQDQRERERQLLSAEMIPTKRTKLSFWAKLLELQTKMFWHGKHLQAHMYSSLPHEWPLMDKGIAYWLDSQSSAQIYLLGNVLIWYTASAGILVYATLLAFYAVRRRRLCFDVSQHEWQRFLMAGDTFFVGYMMHYLPYYFVDRTLFLHNYLPAFVFKLLLLCFVVEHLDYLLRRHCSGRGVHLVRVYRLALLLWLLAVGSVFVKFLPLSYGARKMTIEEVRRLRWKDTWDFILQKNYALN.

Disordered stretches follow at residues 1-85 (MYNN…SAIN) and 115-160 (GSVE…SGSR). Positions 21–31 (QRRKTTTRSRS) are enriched in basic residues. 2 stretches are compositionally biased toward polar residues: residues 39-54 (CTSENVIEKNQTNGAQ) and 132-149 (LTATPTTTPKQASPSPTI). Residues 190–210 (FTVNLSIDLFSWTLFLLAFCT) traverse the membrane as a helical segment. Asn-265 is a glycosylation site (N-linked (GlcNAc...) asparagine). 5 consecutive transmembrane segments (helical) span residues 279–299 (VPIFWFRFIPALCGSLLAPAV), 311–328 (WAAALGGLLVVLDNSLLT), 331–351 (RFVLMESMLLLASTLGIACLL), 370–390 (AGVLLACAGAVKYIGFLALAL), and 418–438 (LSRLLLFVGIPIAVYIGVFYV). MIR domains are found at residues 473–534 (PLAV…VKRP), 545–602 (PDVI…VEIL), and 608–664 (GDSW…VEEH). 4 consecutive transmembrane segments (helical) span residues 749 to 769 (VLIWYTASAGILVYATLLAFY), 788 to 808 (FLMAGDTFFVGYMMHYLPYYF), 813 to 833 (LFLHNYLPAFVFKLLLLCFVV), and 857 to 877 (LALLLWLLAVGSVFVKFLPLS).

Belongs to the glycosyltransferase 39 family. Interacts with tw/POMT2.

The protein resides in the endoplasmic reticulum membrane. The enzyme catalyses a di-trans,poly-cis-dolichyl beta-D-mannosyl phosphate + L-seryl-[protein] = 3-O-(alpha-D-mannosyl)-L-seryl-[protein] + a di-trans,poly-cis-dolichyl phosphate + H(+). It carries out the reaction a di-trans,poly-cis-dolichyl beta-D-mannosyl phosphate + L-threonyl-[protein] = 3-O-(alpha-D-mannosyl)-L-threonyl-[protein] + a di-trans,poly-cis-dolichyl phosphate + H(+). It participates in protein modification; protein glycosylation. Its function is as follows. Rt/POMT1 and tw/POMT2 function as a protein O-mannosyltransferase in association with each other to generate and maintain normal muscle development. This is Protein O-mannosyltransferase 1 from Drosophila pseudoobscura pseudoobscura (Fruit fly).